Reading from the N-terminus, the 372-residue chain is Phospho-N-acetylmuramoyl-pentapeptide-transferase (372 aa).

10 consecutive transmembrane segments (helical) span residues 25–45 (RSLL…PVMI), 73–93 (TMGG…WADL), 98–118 (VWIV…DDWI), 134–154 (FFWT…IAQN), 176–196 (SIPL…YLVI), 211–231 (GLAI…AYLA), 251–271 (LVVI…YNAH), 275–295 (IFMG…IAVM), 300–320 (IVFA…FLQI), and 349–369 (QVVT…LMTL).

This sequence belongs to the glycosyltransferase 4 family. MraY subfamily. Mg(2+) is required as a cofactor.

The protein resides in the cell inner membrane. It catalyses the reaction UDP-N-acetyl-alpha-D-muramoyl-L-alanyl-gamma-D-glutamyl-meso-2,6-diaminopimeloyl-D-alanyl-D-alanine + di-trans,octa-cis-undecaprenyl phosphate = di-trans,octa-cis-undecaprenyl diphospho-N-acetyl-alpha-D-muramoyl-L-alanyl-D-glutamyl-meso-2,6-diaminopimeloyl-D-alanyl-D-alanine + UMP. It participates in cell wall biogenesis; peptidoglycan biosynthesis. Its function is as follows. Catalyzes the initial step of the lipid cycle reactions in the biosynthesis of the cell wall peptidoglycan: transfers peptidoglycan precursor phospho-MurNAc-pentapeptide from UDP-MurNAc-pentapeptide onto the lipid carrier undecaprenyl phosphate, yielding undecaprenyl-pyrophosphoryl-MurNAc-pentapeptide, known as lipid I. The protein is Phospho-N-acetylmuramoyl-pentapeptide-transferase of Acinetobacter baylyi (strain ATCC 33305 / BD413 / ADP1).